Here is a 704-residue protein sequence, read N- to C-terminus: MSNNLYITATESKSGKSAVVLGMMQLLLRDVRKVAFFRPIINQASTDVRDHDINLILRHFGLDIAYEDTYAYSLQDARELINNGQHATLLDNILKKYKKLEDAYDFVLCEGTDFLGKDAAFEFELNADIAANLGCPVMVVANGQQKAARELIASTQLTIDLLDEKGLDVVTAVINRATVTEAEREEIIKSLECKVNCSNPLAVYVLPEESTLGKPTMNDVKKWLGAQVLYGHGRLDTLVDDYIIAAMQIGNFLDYVSQGCLVITPGDRSDIILSSLASRLSTAYPDISGLLLTGGLEPAANVHRLIEGWTGVPIPILSVKDHTYKTIQTLNELYGKIEPDNDRKINTALALFERHIDSSELGSRLINRKSSRITPKMFEFNLIEKAKRNRMRIVLPEGAEERILRAADILVRREVADIILLGDANTVGSRIGDLGLDMDGVQIVQPNLSPKFDEYVAAYHECRKKKGISMEQARDMMNDPTYFGTMMVHKGDADGMVSGAINTTAHTIRPAFEFIKTKPGVSIVSSVFLMCLKDRVLVFGDCAVNPNPTAEQLAEIAISASHTARIFGVDPRVAMLSYSTGSSGKGADVEKVIEATRIAKERAPELLLEGPLQYDAAIDMDVARTKLPGSTVAGQATVFIFPDLNTGNNTYKAVQRAAGAVAIGPVLQGLNKPVNDLSRGCTVADIVNTVAITAIQAQAEKGLI.

The tract at residues 380–704 (FNLIEKAKRN…IQAQAEKGLI (325 aa)) is phosphate acetyltransferase.

The protein in the N-terminal section; belongs to the CobB/CobQ family. It in the C-terminal section; belongs to the phosphate acetyltransferase and butyryltransferase family. As to quaternary structure, homohexamer.

Its subcellular location is the cytoplasm. The enzyme catalyses acetyl-CoA + phosphate = acetyl phosphate + CoA. The protein operates within metabolic intermediate biosynthesis; acetyl-CoA biosynthesis; acetyl-CoA from acetate: step 2/2. In terms of biological role, involved in acetate metabolism. The protein is Phosphate acetyltransferase (pta) of Nitratidesulfovibrio vulgaris (strain ATCC 29579 / DSM 644 / CCUG 34227 / NCIMB 8303 / VKM B-1760 / Hildenborough) (Desulfovibrio vulgaris).